Consider the following 396-residue polypeptide: 8-amino-7-oxononanoate synthase (396 aa).

Residue Arg31 participates in substrate binding. Residue Gly118 to Tyr119 coordinates pyridoxal 5'-phosphate. His143 is a substrate binding site. Positions 189, 217, and 245 each coordinate pyridoxal 5'-phosphate. Lys248 carries the N6-(pyridoxal phosphate)lysine modification. Thr362 is a binding site for substrate.

The protein belongs to the class-II pyridoxal-phosphate-dependent aminotransferase family. BioF subfamily. Homodimer. Pyridoxal 5'-phosphate is required as a cofactor.

It carries out the reaction 6-carboxyhexanoyl-[ACP] + L-alanine + H(+) = (8S)-8-amino-7-oxononanoate + holo-[ACP] + CO2. Its pathway is cofactor biosynthesis; biotin biosynthesis. Its function is as follows. Catalyzes the decarboxylative condensation of pimeloyl-[acyl-carrier protein] and L-alanine to produce 8-amino-7-oxononanoate (AON), [acyl-carrier protein], and carbon dioxide. The chain is 8-amino-7-oxononanoate synthase from Methylobacillus flagellatus (strain ATCC 51484 / DSM 6875 / VKM B-1610 / KT).